The chain runs to 485 residues: Glycogen synthase (485 aa).

Lys21 lines the ADP-alpha-D-glucose pocket.

It belongs to the glycosyltransferase 1 family. Bacterial/plant glycogen synthase subfamily.

The catalysed reaction is [(1-&gt;4)-alpha-D-glucosyl](n) + ADP-alpha-D-glucose = [(1-&gt;4)-alpha-D-glucosyl](n+1) + ADP + H(+). It participates in glycan biosynthesis; glycogen biosynthesis. In terms of biological role, synthesizes alpha-1,4-glucan chains using ADP-glucose. The protein is Glycogen synthase of Pseudomonas syringae pv. syringae (strain B728a).